A 119-amino-acid chain; its full sequence is Promotilin (119 aa).

The first 25 residues, 1-25, serve as a signal peptide directing secretion; that stretch reads MVSRKAVVVLLVVHAAAMLASHTEA. A disordered region spans residues 40-72; it reads EKERNKGQKKSLSVQQASEELGPLDPSEPTKEE.

Belongs to the motilin family.

It localises to the secreted. Plays an important role in the regulation of interdigestive gastrointestinal motility and indirectly causes rhythmic contraction of duodenal and colonic smooth muscle. This is Promotilin (MLN) from Sus scrofa (Pig).